Consider the following 526-residue polypeptide: Outer capsid protein VP5 (526 aa).

The segment at 1-42 (MGKVIRSLNRFGKKVGNALTSNTAKKIYSTIGKAADEFLESE) is involved in membrane permeabilization.

The protein belongs to the orbivirus VP5 family.

It localises to the virion. Its function is as follows. VP5 protein is one of the two proteins (with VP2) which constitute the virus particle outer capsid. Acts as a membrane permeabilization protein that mediates release of viral particles from endosomal compartments into the cytoplasm. Permeabilization activity is probably negatively regulated by VP2 and is triggered by endosomal degradation of VP2 and exposure to low pH. The sequence is that of Outer capsid protein VP5 (Segment-6) from Bluetongue virus 1 (isolate South Africa) (BTV 1).